Reading from the N-terminus, the 189-residue chain is Batroxicidin (189 aa).

An N-terminal signal peptide occupies residues 1–22; sequence MQGFFWKTWLVVALCGTSSSLA. The propeptide occupies 23–155; it reads HRPLSYGEAL…DEEKDRPKRV (133 aa). Intrachain disulfides connect cysteine 79-cysteine 90 and cysteine 101-cysteine 118. The span at 125 to 148 shows a compositional bias: acidic residues; sequence EEEEEDEEEQKAEVEKDEEKEDEE. A disordered region spans residues 125 to 152; it reads EEEEEDEEEQKAEVEKDEEKEDEEKDRP.

It belongs to the cathelicidin family. As to expression, expressed by the venom gland.

It is found in the secreted. The protein localises to the target cell membrane. In terms of biological role, potent antimicrobial peptide against Gram-negative (MIC=0.25 ug/ml against E.coli ATCC 25922, MIC=1 ug/ml against P.aeruginosa) and Gram-positive bacteria (MIC=32 ug/ml against E.faecalis, MIC=32 ug/ml against S.aureus). Adopts an amphipathic alpha helical conformation, that may allow to partition into the target membrane. Low hemolytic activities have been observed on mammalian cells. In addition, when tested in vitro on the parasite Trypanosoma cruzi (responsible of the Chagas disease), is able to reduce the number of the three forms (epimastigote, trypomastigote and amastigote) by inducing cell death through necrosis. The protein is Batroxicidin of Bothrops atrox (Barba amarilla).